Consider the following 185-residue polypeptide: uncharacterized protein (185 aa).

This is an uncharacterized protein from Archaeoglobus fulgidus (strain ATCC 49558 / DSM 4304 / JCM 9628 / NBRC 100126 / VC-16).